A 598-amino-acid chain; its full sequence is Aspartate--tRNA(Asp/Asn) ligase (598 aa).

Residue glutamate 177 participates in L-aspartate binding. The interval 201–204 (QLFK) is aspartate. Position 223 (arginine 223) interacts with L-aspartate. ATP-binding positions include 223–225 (RDE) and glutamine 232. Residue histidine 456 participates in L-aspartate binding. Glutamate 493 serves as a coordination point for ATP. Arginine 500 contributes to the L-aspartate binding site. 545-548 (GLDR) is an ATP binding site.

Belongs to the class-II aminoacyl-tRNA synthetase family. Type 1 subfamily. In terms of assembly, homodimer.

It is found in the cytoplasm. It carries out the reaction tRNA(Asx) + L-aspartate + ATP = L-aspartyl-tRNA(Asx) + AMP + diphosphate. Aspartyl-tRNA synthetase with relaxed tRNA specificity since it is able to aspartylate not only its cognate tRNA(Asp) but also tRNA(Asn). Reaction proceeds in two steps: L-aspartate is first activated by ATP to form Asp-AMP and then transferred to the acceptor end of tRNA(Asp/Asn). In Prochlorococcus marinus (strain AS9601), this protein is Aspartate--tRNA(Asp/Asn) ligase.